A 706-amino-acid chain; its full sequence is uncharacterized protein (706 aa).

3 coiled-coil regions span residues 86 to 162 (TKNV…AKKI), 269 to 299 (DYLK…VNEL), and 337 to 427 (DDYI…QSDY).

This is an uncharacterized protein from Staphylococcus aureus (strain MRSA252).